A 171-amino-acid polypeptide reads, in one-letter code: Probable chemoreceptor glutamine deamidase CheD 1 (171 aa).

Positions 1 to 18 (MTRTTGAAPDRAAPAAGE) are enriched in low complexity. The tract at residues 1-23 (MTRTTGAAPDRAAPAAGETPGGG) is disordered.

Belongs to the CheD family.

It carries out the reaction L-glutaminyl-[protein] + H2O = L-glutamyl-[protein] + NH4(+). Functionally, probably deamidates glutamine residues to glutamate on methyl-accepting chemotaxis receptors (MCPs), playing an important role in chemotaxis. In Anaeromyxobacter dehalogenans (strain 2CP-C), this protein is Probable chemoreceptor glutamine deamidase CheD 1.